Here is a 1038-residue protein sequence, read N- to C-terminus: Bone morphogenetic protein receptor type-2 (1038 aa).

An N-terminal signal peptide occupies residues 1 to 26; sequence MTSSLHRPFRVPWLLWAVLLVSTTAA. Over 27–150 the chain is Extracellular; that stretch reads SQNQERLCAF…PPHSFNRDET (124 aa). 5 disulfide bridges follow: cysteine 34–cysteine 66, cysteine 60–cysteine 84, cysteine 94–cysteine 117, cysteine 99–cysteine 116, and cysteine 118–cysteine 123. Residue asparagine 55 is glycosylated (N-linked (GlcNAc...) asparagine). Asparagine 110 carries N-linked (GlcNAc...) asparagine glycosylation. The N-linked (GlcNAc...) asparagine glycan is linked to asparagine 126. Residues 151-171 traverse the membrane as a helical segment; it reads IIIALASVSVLAVLIVALCFG. At 172–1038 the chain is on the cytoplasmic side; the sequence is YRMLTGDRKQ…VSKDIGMNCL (867 aa). The region spanning 203–504 is the Protein kinase domain; that stretch reads LKLLELIGRG…QCAEERMAEL (302 aa). ATP is bound by residues 209-217, lysine 230, and 280-282; these read IGRGRYGAV and EYY. Residue aspartate 333 is the Proton acceptor of the active site. ATP is bound by residues 337–338 and aspartate 351; that span reads RN. Residue threonine 379 is modified to Phosphothreonine. The residue at position 586 (serine 586) is a Phosphoserine. Residues 593 to 626 form a disordered region; that stretch reads QAQARIPSPETSVTSLSTNTTTTNTTGLTPSTGM. Residues 603–626 show a composition bias toward low complexity; it reads TSVTSLSTNTTTTNTTGLTPSTGM. Residues serine 680 and serine 681 each carry the phosphoserine modification. The tract at residues 746 to 769 is disordered; the sequence is PKQQNLPKRPTSLPLNTKNSTKEP. The residue at position 843 (serine 843) is a Phosphoserine. Over residues 872–896 the composition is skewed to basic and acidic residues; sequence RREQQAGHDEGVLDRLVDRRERPLE. Positions 872-974 are disordered; it reads RREQQAGHDE…SGSGEKIKRR (103 aa). 2 stretches are compositionally biased toward polar residues: residues 909 to 924 and 937 to 964; these read PCSE…TSTA and RPNS…QDGK.

It belongs to the protein kinase superfamily. TKL Ser/Thr protein kinase family. TGFB receptor subfamily. As to quaternary structure, interacts with GDF5. Interacts with BMP4. Interacts with SCUBE3. Interacts with TSC22D1/TSC-22. Interacts with activin A/INHBA. Requires Mg(2+) as cofactor. Mn(2+) is required as a cofactor.

The protein localises to the cell membrane. It carries out the reaction L-threonyl-[receptor-protein] + ATP = O-phospho-L-threonyl-[receptor-protein] + ADP + H(+). The catalysed reaction is L-seryl-[receptor-protein] + ATP = O-phospho-L-seryl-[receptor-protein] + ADP + H(+). On ligand binding, forms a receptor complex consisting of two type II and two type I transmembrane serine/threonine kinases. Type II receptors phosphorylate and activate type I receptors which autophosphorylate, then bind and activate SMAD transcriptional regulators. Can also mediate signaling through the activation of the p38MAPK cascade. Binds to BMP7, BMP2 and, less efficiently, BMP4. Binding is weak but enhanced by the presence of type I receptors for BMPs. Mediates induction of adipogenesis by GDF6. Promotes signaling also by binding to activin A/INHBA. The chain is Bone morphogenetic protein receptor type-2 (Bmpr2) from Mus musculus (Mouse).